Consider the following 378-residue polypeptide: Quinolinate synthase (378 aa).

Iminosuccinate-binding residues include His-59 and Ser-80. Position 125 (Cys-125) interacts with [4Fe-4S] cluster. Iminosuccinate-binding positions include 151 to 153 (YAN) and Ser-168. Cys-212 is a [4Fe-4S] cluster binding site. Iminosuccinate contacts are provided by residues 238–240 (HPE) and Thr-255. Cys-309 serves as a coordination point for [4Fe-4S] cluster.

This sequence belongs to the quinolinate synthase family. Type 1 subfamily. It depends on [4Fe-4S] cluster as a cofactor.

Its subcellular location is the cytoplasm. The enzyme catalyses iminosuccinate + dihydroxyacetone phosphate = quinolinate + phosphate + 2 H2O + H(+). It participates in cofactor biosynthesis; NAD(+) biosynthesis; quinolinate from iminoaspartate: step 1/1. Functionally, catalyzes the condensation of iminoaspartate with dihydroxyacetone phosphate to form quinolinate. The protein is Quinolinate synthase of Burkholderia orbicola (strain MC0-3).